Consider the following 718-residue polypeptide: Polyribonucleotide nucleotidyltransferase (718 aa).

Residues aspartate 496 and aspartate 502 each coordinate Mg(2+). The KH domain occupies 563–622 (PRLLTIKIDPDMIGLVIGPGGKTIKGITEETGAKIDIEDDGTVTISAVDENKAKRARNIV). An S1 motif domain is found at 632-700 (GDVYAGRVTR…NKGRINLTRL (69 aa)).

In terms of assembly, may form homodimers or higher order multimers. Interacts with RNase E (rne). Mg(2+) serves as cofactor.

It localises to the cytoplasm. It catalyses the reaction RNA(n+1) + phosphate = RNA(n) + a ribonucleoside 5'-diphosphate. Involved in mRNA degradation. Catalyzes the phosphorolysis of single-stranded polyribonucleotides processively in the 3'- to 5'-direction. This Nostoc sp. (strain PCC 7120 / SAG 25.82 / UTEX 2576) protein is Polyribonucleotide nucleotidyltransferase.